Consider the following 308-residue polypeptide: Phenylcoumaran benzylic ether reductase 1 (308 aa).

Residues 11–17 (GGTGYIG), R36, and R45 contribute to the NADP(+) site. The Proton acceptor role is filled by K133. Residue R137 coordinates NADP(+).

This sequence belongs to the NmrA-type oxidoreductase family. Isoflavone reductase subfamily. Expressed in apical meristem and cotyledon veins of young seedlings. Expressed in vascular tissues of roots, leaves, stems and petals. Expressed in pollen grains. Expressed at low levels in cauline leaves and siliques.

The enzyme catalyses (-)-dehydrodiconiferyl alcohol + NADPH + H(+) = (S)-isodihydrodehydrodiconiferyl alcohol + NADP(+). It carries out the reaction (+)-dehydrodiconiferyl alcohol + NADPH + H(+) = (R)-isodihydrodehydrodiconiferyl alcohol + NADP(+). It catalyses the reaction (2R,3S)-dihydrodehydrodiconiferyl alcohol + NADPH + H(+) = (S)-tetrahydrodehydrodiconiferyl alcohol + NADP(+). The catalysed reaction is (2S,3R)-dihydrodehydrodiconiferyl alcohol + NADPH + H(+) = (R)-tetrahydrodehydrodiconiferyl alcohol + NADP(+). Its function is as follows. Oxidoreductase involved in lignan biosynthesis. Catalyzes the NADPH-dependent reduction of phenylcoumaran benzylic ethers. Converts dehydrodiconiferyl alcohol (DDC) to isodihydrodehydrodiconiferyl alcohol (IDDDC), and dihydrodehydrodiconiferyl alcohol (DDDC) to tetrahydrodehydrodiconiferyl alcohol (TDDC). Plays an important role in the biosynthesis of secondary metabolites. In addition to the 8-5'-linked neolignan DDC, can reduce the 8-8'-linked lignans, pinoresinol, and lariciresinol, but with lower activities. This Arabidopsis thaliana (Mouse-ear cress) protein is Phenylcoumaran benzylic ether reductase 1.